The chain runs to 309 residues: Thioesterase lcsJ (309 aa).

Residues 11–31 (IAQVHGFVFSWWGVILLLAII) traverse the membrane as a helical segment. The interval 61-83 (ASPTAENAQRRVPKTPKTGATDT) is disordered. Residue asparagine 112 is glycosylated (N-linked (GlcNAc...) asparagine). The interval 239 to 275 (SGWIPPRPESTGNSKSLDSLQANGHGATENGKHDAKD) is disordered. Polar residues predominate over residues 248–260 (STGNSKSLDSLQA).

It belongs to the lcsJ thioesterase family.

The protein localises to the membrane. It functions in the pathway secondary metabolite biosynthesis. In terms of biological role, thioesterase; part of the gene cluster that mediates the biosynthesis of the lipopeptide antibiotics leucinostatins that show extensive biological activities, including antimalarial, antiviral, antibacterial, antifungal, and antitumor activities, as well as phytotoxic. Leucinostatin A contains nine amino acid residues, including the unusual amino acid 4-methyl-L-proline (MePro), 2-amino-6-hydroxy-4-methyl-8-oxodecanoic acid (AHyMeOA), 3-hydroxyleucine (HyLeu), alpha-aminoisobutyric acid (AIB), beta-Ala, a 4-methylhex-2-enoic acid at the N-terminus as well as a N1,N1-dimethylpropane-1,2-diamine (DPD) at the C-terminus. The biosynthesis of leucinostatins is probably initiated with the assembly of 4-methylhex-2-enoic acid by a reducing PKS. Two reducing polyketide synthases, lcsB and lcsC, have been identified in the cluster and it is not clear which is the one that assembles 4-methylhex-2-enoic acid since both contain KS, AT, DH, cMT, ER, KR and ACP domains. The polyketide residue might be transferred to the NRPS lcsA, mediated by two additional enzymes, the acyl-CoA ligase lcsD and the thioesterase lcsE. The linear polyketide carboxylic acid, which is released from PKS, is converted to a CoA thioester by lcsD, and then lcsE hydrolyzes the thiol bond and shuttles the polyketide intermediate to lcsA. The C domain of the first module catalyzed the condensation of 4-methylhex-2-enoic acid and MePro carried by domain A1, followed by successive condensations of nine amino acids to trigger the elongation of the linear peptide. A5 and A6 domains of lcsA are proposed to incorporate leucine, A2 AHyMeOA, and A3 incorporates HyLeu. A4, A7 and A8 incorporate AIB. The AHyMeOA in leucinostatin A activated by the A2 might be produced by the second PKS (lcsB or lcsC) present within the cluster. The MePro is probably produced via leucine cyclization and may originate from a separate pathway, independent of the cluster. Another nonproteinogenic amino acid, beta-Ala, could be produced by an aspartic acid decarboxylase also localized outside of the cluster. Two candidates are VFPBJ_01400 and VFPBJ_10476. The final peptide scaffold may be released by the NAD(P)H-dependent thioester reductase (TE) at the C-terminal region of lcsA. Transamination of the lcsA product by the transaminase lcsP may produce DPD at the C-terminus. Further hydroxylation steps performed alternatively by the cytochrome P450 monooxygenases lcsI, lcsK and lcsN then yield the non-methylated leucinostatins precursor. It is also possible that leucines can be hydroxylated prior to their incorporation into the peptide. Varying extents of methylation then lead to the formation of leucinostatins A and B. This Purpureocillium lilacinum (Paecilomyces lilacinus) protein is Thioesterase lcsJ.